Reading from the N-terminus, the 209-residue chain is Hydrogenase expression/formation protein HupM (209 aa).

Positions 21, 67, and 98 each coordinate Ni(2+).

It belongs to the peptidase A31 family.

In terms of biological role, not known. Could be involved in the processing of hydrogenase. The polypeptide is Hydrogenase expression/formation protein HupM (hupM) (Azotobacter chroococcum mcd 1).